The primary structure comprises 328 residues: Interleukin-12 subunit beta (328 aa).

A signal peptide spans 1-22; it reads MCHQQLVISWFSLVFLASPLMA. The Ig-like C2-type domain maps to 29 to 106; it reads DVYVVELDWY…LSHSLLLLHK (78 aa). Cysteine 50 and cysteine 90 are oxidised to a cystine. Asparagine 125, asparagine 135, and asparagine 222 each carry an N-linked (GlcNAc...) asparagine glycan. The region spanning 237–328 is the Fibronectin type-III domain; it reads PPKNLQLKPL…WSEWASVPCS (92 aa).

Belongs to the IL-12B family. In terms of assembly, heterodimer with IL12A; disulfide-linked. The heterodimer is known as interleukin IL-12. Heterodimer with IL23A; disulfide-linked. The heterodimer is known as interleukin IL-23. Also secreted as a monomer. Interacts with NBR1; this interaction promotes IL-12 secretion.

It is found in the secreted. In terms of biological role, cytokine that can act as a growth factor for activated T and NK cells, enhance the lytic activity of NK/lymphokine-activated killer cells, and stimulate the production of IFN-gamma by resting PBMC. Its function is as follows. Associates with IL23A to form the IL-23 interleukin, a heterodimeric cytokine which functions in innate and adaptive immunity. IL-23 may constitute with IL-17 an acute response to infection in peripheral tissues. IL-23 binds to a heterodimeric receptor complex composed of IL12RB1 and IL23R, activates the Jak-Stat signaling cascade, stimulates memory rather than naive T-cells and promotes production of pro-inflammatory cytokines. IL-23 induces autoimmune inflammation and thus may be responsible for autoimmune inflammatory diseases and may be important for tumorigenesis. The polypeptide is Interleukin-12 subunit beta (IL12B) (Macaca mulatta (Rhesus macaque)).